The chain runs to 57 residues: Large ribosomal subunit protein bL32c (57 aa).

Belongs to the bacterial ribosomal protein bL32 family.

Its subcellular location is the plastid. It is found in the chloroplast. This is Large ribosomal subunit protein bL32c from Nandina domestica (Heavenly bamboo).